The sequence spans 656 residues: MSDIQQDSTSTTLGGTSLGGTSLGGTSLGGTSLGGTSLGGTSLGGTSLGGSTTTSTTTPKSTNSKNKKKKQTSSNNNNNNNNNNNNNNENNRDNDAGSSNKSFMPLNNNEDEGTKDYKQGGYHPVRRNDVYGNRYQVVDKLGWGHFSTVWLCNDKDTPITTSSSSSSTTTTTTSSSSNGNGNGNGGNVIGYKQVALKIVRSARTYSETAEDEIKILNAISKYNAQDKCVARLLDHFTHRGPNGRHYCMVFELLGNNLLDLIKHHRYRGMPITLVKTLMKQTLIALDYIHTKCKIIHTDLKPENVLLEKSFDFFTSNDYIWSEKYGYFKNRTSSSNKQSQQQQQPQQQQSQQNINDYSDDSDDSHSDYSDSEDELKNKGNKKSSNRDRDNNKNKNIKKDDNKSSVNEINNISKENTDNKDLNSSEENKKEEEQQQNKKEEPTTTTTTATATATTTTTTGTEEFKFVNGISYKFKKNNELFNENHYPRAQLVDLGNACWTDKHFTDDIQTRQYRAPEAIVKAKWGTPVDIWSAACMAFELATGDHLFKPKSGKGFEKSDDHLALMIELLGKPPRFIFAGGDESRVYFTHKGDLRKIPDLSDQWPLFSVLTEKYKFSIQEAKDFEAFLLPMLNYLPEKRATAKDCLNHTWLKDVPPFLN.

A disordered region spans residues 1-127; the sequence is MSDIQQDSTS…KQGGYHPVRR (127 aa). The segment covering 16-48 has biased composition (gly residues); it reads TSLGGTSLGGTSLGGTSLGGTSLGGTSLGGTSL. Low complexity-rich tracts occupy residues 49 to 64 and 72 to 89; these read GGST…STNS and TSSN…NNNE. The span at 96–108 shows a compositional bias: polar residues; that stretch reads AGSSNKSFMPLNN. The Protein kinase domain occupies 135 to 648; it reads YQVVDKLGWG…AKDCLNHTWL (514 aa). 141-149 provides a ligand contact to ATP; sequence LGWGHFSTV. The interval 157–185 is disordered; it reads TPITTSSSSSSTTTTTTSSSSNGNGNGNG. Low complexity predominate over residues 160 to 179; the sequence is TTSSSSSSTTTTTTSSSSNG. Lys-197 lines the ATP pocket. The active-site Proton acceptor is the Asp-298. Residues 330 to 454 are disordered; that stretch reads RTSSSNKQSQ…TTATATATTT (125 aa). Residues 332 to 355 show a composition bias toward low complexity; that stretch reads SSSNKQSQQQQQPQQQQSQQNIND. Composition is skewed to basic and acidic residues over residues 383–401 and 413–440; these read SNRD…DDNK and ENTD…KEEP. The segment covering 441–454 has biased composition (low complexity); it reads TTTTTTATATATTT.

This sequence belongs to the protein kinase superfamily. CMGC Ser/Thr protein kinase family.

The enzyme catalyses L-seryl-[protein] + ATP = O-phospho-L-seryl-[protein] + ADP + H(+). It catalyses the reaction L-threonyl-[protein] + ATP = O-phospho-L-threonyl-[protein] + ADP + H(+). This is Probable serine/threonine-protein kinase sky1 (sky1) from Dictyostelium discoideum (Social amoeba).